The sequence spans 352 residues: Glycerol-1-phosphate dehydrogenase [NAD(P)+] (352 aa).

Residues 91–95 (GRVID) and 113–116 (TVAS) each bind NAD(+). Aspartate 118 serves as a coordination point for substrate. Residue serine 122 participates in NAD(+) binding. Glutamate 169 provides a ligand contact to substrate. Glutamate 169 and histidine 249 together coordinate Zn(2+). Histidine 253 contacts substrate. Position 269 (histidine 269) interacts with Zn(2+).

The protein belongs to the glycerol-1-phosphate dehydrogenase family. Homodimer. Zn(2+) serves as cofactor.

It is found in the cytoplasm. It carries out the reaction sn-glycerol 1-phosphate + NAD(+) = dihydroxyacetone phosphate + NADH + H(+). The enzyme catalyses sn-glycerol 1-phosphate + NADP(+) = dihydroxyacetone phosphate + NADPH + H(+). The protein operates within membrane lipid metabolism; glycerophospholipid metabolism. Functionally, catalyzes the NAD(P)H-dependent reduction of dihydroxyacetonephosphate (DHAP or glycerone phosphate) to glycerol 1-phosphate (G1P). The G1P thus generated is used as the glycerophosphate backbone of phospholipids in the cellular membranes of Archaea. This is Glycerol-1-phosphate dehydrogenase [NAD(P)+] from Caldivirga maquilingensis (strain ATCC 700844 / DSM 13496 / JCM 10307 / IC-167).